The primary structure comprises 271 residues: 2-dehydro-3-deoxyphosphooctonate aldolase (271 aa).

The protein belongs to the KdsA family.

The protein localises to the cytoplasm. The catalysed reaction is D-arabinose 5-phosphate + phosphoenolpyruvate + H2O = 3-deoxy-alpha-D-manno-2-octulosonate-8-phosphate + phosphate. The protein operates within carbohydrate biosynthesis; 3-deoxy-D-manno-octulosonate biosynthesis; 3-deoxy-D-manno-octulosonate from D-ribulose 5-phosphate: step 2/3. It functions in the pathway bacterial outer membrane biogenesis; lipopolysaccharide biosynthesis. The chain is 2-dehydro-3-deoxyphosphooctonate aldolase from Campylobacter jejuni subsp. jejuni serotype O:23/36 (strain 81-176).